A 406-amino-acid chain; its full sequence is Protein phosphatase 2C (406 aa).

In terms of domain architecture, PPM-type phosphatase spans 23 to 274 (RCGSNCVNGY…DNISCMIVQF (252 aa)). Mn(2+) is bound by residues D55, G56, D221, and D265.

This sequence belongs to the PP2C family. Monomer. Mg(2+) serves as cofactor. It depends on Mn(2+) as a cofactor.

It carries out the reaction O-phospho-L-seryl-[protein] + H2O = L-seryl-[protein] + phosphate. It catalyses the reaction O-phospho-L-threonyl-[protein] + H2O = L-threonyl-[protein] + phosphate. In terms of biological role, enzyme with a broad specificity. This Leishmania chagasi protein is Protein phosphatase 2C.